The chain runs to 185 residues: Adenine phosphoribosyltransferase (185 aa).

This sequence belongs to the purine/pyrimidine phosphoribosyltransferase family. Homodimer.

The protein resides in the cytoplasm. The catalysed reaction is AMP + diphosphate = 5-phospho-alpha-D-ribose 1-diphosphate + adenine. Its pathway is purine metabolism; AMP biosynthesis via salvage pathway; AMP from adenine: step 1/1. Functionally, catalyzes a salvage reaction resulting in the formation of AMP, that is energically less costly than de novo synthesis. The chain is Adenine phosphoribosyltransferase from Corynebacterium glutamicum (strain ATCC 13032 / DSM 20300 / JCM 1318 / BCRC 11384 / CCUG 27702 / LMG 3730 / NBRC 12168 / NCIMB 10025 / NRRL B-2784 / 534).